Consider the following 71-residue polypeptide: DNA gyrase inhibitor YacG (71 aa).

Zn(2+) is bound by residues cysteine 7, cysteine 10, cysteine 26, and cysteine 30.

The protein belongs to the DNA gyrase inhibitor YacG family. As to quaternary structure, interacts with GyrB. Zn(2+) serves as cofactor.

Functionally, inhibits all the catalytic activities of DNA gyrase by preventing its interaction with DNA. Acts by binding directly to the C-terminal domain of GyrB, which probably disrupts DNA binding by the gyrase. This chain is DNA gyrase inhibitor YacG, found in Shewanella amazonensis (strain ATCC BAA-1098 / SB2B).